The following is a 325-amino-acid chain: Protease HtpX homolog 2 (325 aa).

The next 2 membrane-spanning stretches (helical) occupy residues Ile-17 to Phe-37 and Leu-42 to Gly-62. Position 146 (His-146) interacts with Zn(2+). Residue Glu-147 is part of the active site. His-150 lines the Zn(2+) pocket. 2 consecutive transmembrane segments (helical) span residues Leu-158 to Trp-178 and Ile-195 to Leu-215. Glu-222 contacts Zn(2+).

Belongs to the peptidase M48B family. Zn(2+) serves as cofactor.

It localises to the cell membrane. The polypeptide is Protease HtpX homolog 2 (Sulfurisphaera tokodaii (strain DSM 16993 / JCM 10545 / NBRC 100140 / 7) (Sulfolobus tokodaii)).